We begin with the raw amino-acid sequence, 607 residues long: Nexilin (607 aa).

Basic and acidic residues predominate over residues 1-14 (MNDVSQKAEIKEML). Disordered regions lie at residues 1–143 (MNDV…EDKM) and 165–268 (ETEA…RRRI). The residue at position 16 (Ser16) is a Phosphoserine. 4 stretches are compositionally biased toward basic and acidic residues: residues 40 to 85 (GKFD…RAEQ), 120 to 143 (KTKD…EDKM), 167 to 221 (EAKK…HMVN), and 228 to 268 (DRET…RRRI). Ser172 is subject to Phosphoserine. A phosphoserine mark is found at Ser281, Ser288, and Ser296. Thr301 carries the post-translational modification Phosphothreonine. Disordered regions lie at residues 419 to 444 (NFHE…KVNM) and 480 to 514 (AALQ…GAPW). A phosphoserine mark is found at Ser495 and Ser500. The residue at position 502 (Thr502) is a Phosphothreonine. The Ig-like domain maps to 513 to 601 (PWFKKPLRNT…GSAASTCILT (89 aa)).

In terms of assembly, interacts with F-actin.

Its subcellular location is the cytoplasm. It localises to the cytoskeleton. The protein localises to the cell junction. The protein resides in the adherens junction. It is found in the myofibril. Its subcellular location is the sarcomere. It localises to the z line. Functionally, involved in regulating cell migration through association with the actin cytoskeleton. Has an essential role in the maintenance of Z line and sarcomere integrity. This Mus musculus (Mouse) protein is Nexilin.